The sequence spans 206 residues: uncharacterized protein (206 aa).

Transmembrane regions (helical) follow at residues 9–29 (ILSL…SVLT), 47–67 (LGVV…LAFL), 74–94 (FFVI…INTI), and 150–170 (IAVI…FYAF).

The protein belongs to the Rht family.

It is found in the cell membrane. This is an uncharacterized protein from Synechocystis sp. (strain ATCC 27184 / PCC 6803 / Kazusa).